A 263-amino-acid chain; its full sequence is Phosphoribosylaminoimidazole-succinocarboxamide synthase (263 aa).

The segment at 239-263 (MNENEPPKPAGPVLVSSKPDGETRH) is disordered.

This sequence belongs to the SAICAR synthetase family.

It catalyses the reaction 5-amino-1-(5-phospho-D-ribosyl)imidazole-4-carboxylate + L-aspartate + ATP = (2S)-2-[5-amino-1-(5-phospho-beta-D-ribosyl)imidazole-4-carboxamido]succinate + ADP + phosphate + 2 H(+). It participates in purine metabolism; IMP biosynthesis via de novo pathway; 5-amino-1-(5-phospho-D-ribosyl)imidazole-4-carboxamide from 5-amino-1-(5-phospho-D-ribosyl)imidazole-4-carboxylate: step 1/2. The chain is Phosphoribosylaminoimidazole-succinocarboxamide synthase from Chelativorans sp. (strain BNC1).